The following is a 143-amino-acid chain: Large ribosomal subunit protein bL28c (143 aa).

The N-terminal 66 residues, 1–66 (MTTMATQGAW…SFPGIQPIVA (66 aa)), are a transit peptide targeting the chloroplast.

It belongs to the bacterial ribosomal protein bL28 family. In terms of assembly, part of the 50S ribosomal subunit.

Its subcellular location is the plastid. It localises to the chloroplast. The protein is Large ribosomal subunit protein bL28c (RPL28) of Arabidopsis thaliana (Mouse-ear cress).